Consider the following 254-residue polypeptide: Imidazole glycerol phosphate synthase subunit HisF (254 aa).

Residues Asp11 and Asp130 contribute to the active site.

Belongs to the HisA/HisF family. In terms of assembly, heterodimer of HisH and HisF.

Its subcellular location is the cytoplasm. The enzyme catalyses 5-[(5-phospho-1-deoxy-D-ribulos-1-ylimino)methylamino]-1-(5-phospho-beta-D-ribosyl)imidazole-4-carboxamide + L-glutamine = D-erythro-1-(imidazol-4-yl)glycerol 3-phosphate + 5-amino-1-(5-phospho-beta-D-ribosyl)imidazole-4-carboxamide + L-glutamate + H(+). The protein operates within amino-acid biosynthesis; L-histidine biosynthesis; L-histidine from 5-phospho-alpha-D-ribose 1-diphosphate: step 5/9. In terms of biological role, IGPS catalyzes the conversion of PRFAR and glutamine to IGP, AICAR and glutamate. The HisF subunit catalyzes the cyclization activity that produces IGP and AICAR from PRFAR using the ammonia provided by the HisH subunit. The protein is Imidazole glycerol phosphate synthase subunit HisF of Acidiphilium cryptum (strain JF-5).